Here is a 311-residue protein sequence, read N- to C-terminus: tRNA-cytidine(32) 2-sulfurtransferase (311 aa).

Residues 47 to 52 (SGGKDS) carry the PP-loop motif motif. [4Fe-4S] cluster is bound by residues Cys-122, Cys-125, and Cys-213.

This sequence belongs to the TtcA family. Homodimer. The cofactor is Mg(2+). Requires [4Fe-4S] cluster as cofactor.

The protein localises to the cytoplasm. It carries out the reaction cytidine(32) in tRNA + S-sulfanyl-L-cysteinyl-[cysteine desulfurase] + AH2 + ATP = 2-thiocytidine(32) in tRNA + L-cysteinyl-[cysteine desulfurase] + A + AMP + diphosphate + H(+). Its pathway is tRNA modification. Its function is as follows. Catalyzes the ATP-dependent 2-thiolation of cytidine in position 32 of tRNA, to form 2-thiocytidine (s(2)C32). The sulfur atoms are provided by the cysteine/cysteine desulfurase (IscS) system. This is tRNA-cytidine(32) 2-sulfurtransferase from Citrobacter koseri (strain ATCC BAA-895 / CDC 4225-83 / SGSC4696).